Consider the following 394-residue polypeptide: ORC1-type DNA replication protein 3 (394 aa).

ATP is bound by residues 66–70 and Tyr207; that span reads TGKTF.

It belongs to the CDC6/cdc18 family. Monomer. Interacts with Cdc6-1, Cdc6-2, MCM and PolB1.

Involved in regulation of DNA replication. May play essential roles in origin recognition and cell cycle control of replication. Binds to DNA, with a preference for molecules that contain a bubble, a fork, or a tail. Inhibits the binding of the MCM helicase to the origin DNA and inhibits its DNA helicase activity. Also regulates the DNA polymerase and the nuclease activities of PolB1. Inhibits the DNA-binding activity of Cdc6-1 and Cdc6-2. The sequence is that of ORC1-type DNA replication protein 3 (cdc6-3) from Saccharolobus solfataricus (strain ATCC 35092 / DSM 1617 / JCM 11322 / P2) (Sulfolobus solfataricus).